We begin with the raw amino-acid sequence, 358 residues long: Probable isocitrate dehydrogenase [NAD] subunit alpha, mitochondrial (358 aa).

Residues arginine 108, arginine 118, arginine 139, and aspartate 226 each coordinate substrate. Aspartate 226, aspartate 250, and aspartate 254 together coordinate Mg(2+).

Belongs to the isocitrate and isopropylmalate dehydrogenases family. In terms of assembly, heterooligomer of subunits alpha, beta, and gamma in the apparent ratio of 2:1:1. The cofactor is Mg(2+). Requires Mn(2+) as cofactor.

It localises to the mitochondrion. It catalyses the reaction D-threo-isocitrate + NAD(+) = 2-oxoglutarate + CO2 + NADH. In Caenorhabditis elegans, this protein is Probable isocitrate dehydrogenase [NAD] subunit alpha, mitochondrial (idha-1).